An 83-amino-acid polypeptide reads, in one-letter code: MPEPIDAMSFEDALSELERIVRGLEGGQMKLEDAISAYERGAALRRHCDAKLGEAEMRVRAIVQNDDGTTGTEPLADTGESGR.

Residues 63 to 83 are disordered; sequence VQNDDGTTGTEPLADTGESGR.

Belongs to the XseB family. As to quaternary structure, heterooligomer composed of large and small subunits.

It localises to the cytoplasm. It catalyses the reaction Exonucleolytic cleavage in either 5'- to 3'- or 3'- to 5'-direction to yield nucleoside 5'-phosphates.. In terms of biological role, bidirectionally degrades single-stranded DNA into large acid-insoluble oligonucleotides, which are then degraded further into small acid-soluble oligonucleotides. This is Exodeoxyribonuclease 7 small subunit from Gluconobacter oxydans (strain 621H) (Gluconobacter suboxydans).